A 245-amino-acid chain; its full sequence is AA9 family lytic polysaccharide monooxygenase B (245 aa).

The signal sequence occupies residues 1 to 18 (MKSAIFAAAVLGAAGVSA). Positions 19 and 105 each coordinate Cu(2+). The cysteines at positions 116 and 120 are disulfide-linked. Residues H179 and Q188 each coordinate O2. Y190 is a binding site for Cu(2+).

It belongs to the polysaccharide monooxygenase AA9 family. The cofactor is Cu(2+).

The protein localises to the secreted. It carries out the reaction [(1-&gt;4)-beta-D-glucosyl]n+m + reduced acceptor + O2 = 4-dehydro-beta-D-glucosyl-[(1-&gt;4)-beta-D-glucosyl]n-1 + [(1-&gt;4)-beta-D-glucosyl]m + acceptor + H2O.. Functionally, lytic polysaccharide monooxygenase (LPMO) that depolymerizes crystalline and amorphous polysaccharides via the oxidation of scissile alpha- or beta-(1-4)-glycosidic bonds, yielding C1 or C4 oxidation products. Catalysis by LPMOs requires the reduction of the active-site copper from Cu(II) to Cu(I) by a reducing agent and H(2)O(2) or O(2) as a cosubstrate. Active on hemicelluloses, including xylan, glucomannan, and xyloglucan. Has no activity on ivory nut mannan (INM), a linear beta-1,4-linked mannan without substitutions. In Malbranchea cinnamomea (Thermophilic fungus), this protein is AA9 family lytic polysaccharide monooxygenase B.